The sequence spans 660 residues: GRIP and coiled-coil domain-containing protein 2 (660 aa).

The segment at 1–28 (MSAPESSISPVPPPGSSSGGGKKLDSLP) is disordered. 3 coiled-coil regions span residues 30–92 (EDLV…VENN), 115–464 (EWKE…KAIA), and 517–596 (DEYR…EYLK). In terms of domain architecture, GRIP spans 585–636 (ELSNEKNMEYLKNVFVQFLKPESVPAERDQLVIVLQRVLHLSPKEVEILKAA).

The sequence is that of GRIP and coiled-coil domain-containing protein 2 from Caenorhabditis elegans.